A 212-amino-acid chain; its full sequence is Phosphatidylserine decarboxylase proenzyme (212 aa).

The active-site Schiff-base intermediate with substrate; via pyruvic acid is serine 182. A Pyruvic acid (Ser); by autocatalysis modification is found at serine 182.

This sequence belongs to the phosphatidylserine decarboxylase family. PSD-A subfamily. As to quaternary structure, heterodimer of a large membrane-associated beta subunit and a small pyruvoyl-containing alpha subunit. Requires pyruvate as cofactor. Post-translationally, is synthesized initially as an inactive proenzyme. Formation of the active enzyme involves a self-maturation process in which the active site pyruvoyl group is generated from an internal serine residue via an autocatalytic post-translational modification. Two non-identical subunits are generated from the proenzyme in this reaction, and the pyruvate is formed at the N-terminus of the alpha chain, which is derived from the carboxyl end of the proenzyme. The post-translation cleavage follows an unusual pathway, termed non-hydrolytic serinolysis, in which the side chain hydroxyl group of the serine supplies its oxygen atom to form the C-terminus of the beta chain, while the remainder of the serine residue undergoes an oxidative deamination to produce ammonia and the pyruvoyl prosthetic group on the alpha chain.

It is found in the cell membrane. The enzyme catalyses a 1,2-diacyl-sn-glycero-3-phospho-L-serine + H(+) = a 1,2-diacyl-sn-glycero-3-phosphoethanolamine + CO2. The protein operates within phospholipid metabolism; phosphatidylethanolamine biosynthesis; phosphatidylethanolamine from CDP-diacylglycerol: step 2/2. Its function is as follows. Catalyzes the formation of phosphatidylethanolamine (PtdEtn) from phosphatidylserine (PtdSer). This Chlorobium luteolum (strain DSM 273 / BCRC 81028 / 2530) (Pelodictyon luteolum) protein is Phosphatidylserine decarboxylase proenzyme.